The sequence spans 266 residues: Translation initiation factor 2 subunit alpha (266 aa).

The S1 motif domain maps to 12 to 83; it reads GDIVIGTVKD…RKGHIDLSLK (72 aa).

Belongs to the eIF-2-alpha family. Heterotrimer composed of an alpha, a beta and a gamma chain.

EIF-2 functions in the early steps of protein synthesis by forming a ternary complex with GTP and initiator tRNA. In Methanocaldococcus jannaschii (strain ATCC 43067 / DSM 2661 / JAL-1 / JCM 10045 / NBRC 100440) (Methanococcus jannaschii), this protein is Translation initiation factor 2 subunit alpha (eif2a).